We begin with the raw amino-acid sequence, 328 residues long: MRIIFWGTPEYSIASLDIFIKSKHEVIGVVSQPDKKRSRGNKLISSPVKSFAEQESIKIYTPVKIRDNIHFINELKSLSCDLFIVIAYGKILPKEILEIPKFGCWNAHASLLPRWRGAAPIQWSLIKGDKFTGVGIMKMNEGLDTGDLLLEEKIKIGNEDNLNTLSEKLSILSAKLFLKAASLLEENFYKNTKSQLTKQNSLGREITYARMIEKSDFRVDWGNQAIAISQKIKGLYPRANTIFRGKNLKILKIKVLSSDEIKNEKYLFMSDYSRPGIILAVIEDEGIIISTKTDPIILLEAKLEGKNISSKKQLIQQLKPSVGEYLSD.

110–113 (SLLP) is a (6S)-5,6,7,8-tetrahydrofolate binding site.

The protein belongs to the Fmt family.

The enzyme catalyses L-methionyl-tRNA(fMet) + (6R)-10-formyltetrahydrofolate = N-formyl-L-methionyl-tRNA(fMet) + (6S)-5,6,7,8-tetrahydrofolate + H(+). Functionally, attaches a formyl group to the free amino group of methionyl-tRNA(fMet). The formyl group appears to play a dual role in the initiator identity of N-formylmethionyl-tRNA by promoting its recognition by IF2 and preventing the misappropriation of this tRNA by the elongation apparatus. In Prochlorococcus marinus (strain AS9601), this protein is Methionyl-tRNA formyltransferase.